Reading from the N-terminus, the 291-residue chain is MAGSKEIRSKIKSVENTRKITKAMEMVAASKMRKAQERMRMARPYAEKIRNVTAHLSHANSEYKHPFVVKREKVGNVGLIVVSSDKGLCGGLNTNVLRLSINQMKAWEGEGKKTIVSAIGNKGFTYLNRINADVKSHVTGLGDTPHLEKLIGTIKVMLDAYIAGEIDQLHICYTRFLNTMKQEAVIEQVLPLSDDKLETSATTAKGHWDYIYEPDANVVIDELMTRYIETIIYHAVTENMASEQSARMVAMKAASDNAKNVIGELKLVYNKARQAAITKEISEIVGGAAAV.

It belongs to the ATPase gamma chain family. In terms of assembly, F-type ATPases have 2 components, CF(1) - the catalytic core - and CF(0) - the membrane proton channel. CF(1) has five subunits: alpha(3), beta(3), gamma(1), delta(1), epsilon(1). CF(0) has three main subunits: a, b and c.

It localises to the cell inner membrane. Produces ATP from ADP in the presence of a proton gradient across the membrane. The gamma chain is believed to be important in regulating ATPase activity and the flow of protons through the CF(0) complex. The chain is ATP synthase gamma chain from Methylobacillus flagellatus (strain ATCC 51484 / DSM 6875 / VKM B-1610 / KT).